Reading from the N-terminus, the 444-residue chain is Glutamyl-tRNA(Gln) amidotransferase subunit D (444 aa).

In terms of domain architecture, Asparaginase/glutaminase spans 92 to 424 (SEIKIISTGG…EKIQNLMITN (333 aa)). Catalysis depends on residues threonine 102, threonine 178, aspartate 179, and lysine 257.

This sequence belongs to the asparaginase 1 family. GatD subfamily. In terms of assembly, heterodimer of GatD and GatE.

The enzyme catalyses L-glutamyl-tRNA(Gln) + L-glutamine + ATP + H2O = L-glutaminyl-tRNA(Gln) + L-glutamate + ADP + phosphate + H(+). Allows the formation of correctly charged Gln-tRNA(Gln) through the transamidation of misacylated Glu-tRNA(Gln) in organisms which lack glutaminyl-tRNA synthetase. The reaction takes place in the presence of glutamine and ATP through an activated gamma-phospho-Glu-tRNA(Gln). The GatDE system is specific for glutamate and does not act on aspartate. In Saccharolobus solfataricus (strain ATCC 35092 / DSM 1617 / JCM 11322 / P2) (Sulfolobus solfataricus), this protein is Glutamyl-tRNA(Gln) amidotransferase subunit D.